A 256-amino-acid polypeptide reads, in one-letter code: Hydroxyacylglutathione hydrolase (256 aa).

7 residues coordinate Zn(2+): His-55, His-57, Asp-59, His-60, His-113, Asp-130, and His-168.

Belongs to the metallo-beta-lactamase superfamily. Glyoxalase II family. As to quaternary structure, monomer. Requires Zn(2+) as cofactor.

The catalysed reaction is an S-(2-hydroxyacyl)glutathione + H2O = a 2-hydroxy carboxylate + glutathione + H(+). The protein operates within secondary metabolite metabolism; methylglyoxal degradation; (R)-lactate from methylglyoxal: step 2/2. Its function is as follows. Thiolesterase that catalyzes the hydrolysis of S-D-lactoyl-glutathione to form glutathione and D-lactic acid. The protein is Hydroxyacylglutathione hydrolase of Psychromonas ingrahamii (strain DSM 17664 / CCUG 51855 / 37).